The primary structure comprises 413 residues: uncharacterized protein (413 aa).

This is an uncharacterized protein from Bacillus subtilis (strain 168).